The following is a 157-amino-acid chain: Protein-export protein SecB (157 aa).

It belongs to the SecB family. As to quaternary structure, homotetramer, a dimer of dimers. One homotetramer interacts with 1 SecA dimer.

It localises to the cytoplasm. Functionally, one of the proteins required for the normal export of preproteins out of the cell cytoplasm. It is a molecular chaperone that binds to a subset of precursor proteins, maintaining them in a translocation-competent state. It also specifically binds to its receptor SecA. The protein is Protein-export protein SecB of Photobacterium profundum (strain SS9).